The primary structure comprises 376 residues: DNA replication and repair protein RecF (376 aa).

35–42 (GDNGSGKT) contributes to the ATP binding site.

This sequence belongs to the RecF family.

It is found in the cytoplasm. Functionally, the RecF protein is involved in DNA metabolism; it is required for DNA replication and normal SOS inducibility. RecF binds preferentially to single-stranded, linear DNA. It also seems to bind ATP. The chain is DNA replication and repair protein RecF from Agrobacterium fabrum (strain C58 / ATCC 33970) (Agrobacterium tumefaciens (strain C58)).